A 532-amino-acid chain; its full sequence is 3-hydroxy-3-methylglutaryl-coenzyme A reductase 1 (532 aa).

The helical transmembrane segment at 63-83 threads the bilayer; it reads FATVVYLVSLFAHPDAPATTT. The interval 77–117 is linker; the sequence is DAPATTTGDDDDGQGGSRRARPAAAEPAPMHGHGGGMMEAD. The disordered stretch occupies residues 78–111; that stretch reads APATTTGDDDDGQGGSRRARPAAAEPAPMHGHGG. The span at 98-107 shows a compositional bias: low complexity; it reads PAAAEPAPMH. Residues 118 to 532 are catalytic; it reads DEEIVAAVAS…SSKDVAKAAS (415 aa). The active-site Charge relay system is the Glu211. N-linked (GlcNAc...) asparagine glycosylation is present at Asn275. Residues Lys343 and Asp419 each act as charge relay system in the active site. His517 functions as the Proton donor in the catalytic mechanism. A glycan (N-linked (GlcNAc...) asparagine) is linked at Asn521.

This sequence belongs to the HMG-CoA reductase family.

The protein resides in the endoplasmic reticulum membrane. It catalyses the reaction (R)-mevalonate + 2 NADP(+) + CoA = (3S)-3-hydroxy-3-methylglutaryl-CoA + 2 NADPH + 2 H(+). It functions in the pathway metabolic intermediate biosynthesis; (R)-mevalonate biosynthesis; (R)-mevalonate from acetyl-CoA: step 3/3. Its function is as follows. Catalyzes the synthesis of mevalonate. The specific precursor of all isoprenoid compounds present in plants. The chain is 3-hydroxy-3-methylglutaryl-coenzyme A reductase 1 (HMG1) from Oryza sativa subsp. japonica (Rice).